The following is a 127-amino-acid chain: Protein ApaG (127 aa).

The region spanning 3–127 is the ApaG domain; sequence DQPPTEIQIS…FRLAAATVFH (125 aa).

The chain is Protein ApaG from Acidithiobacillus ferrooxidans (strain ATCC 23270 / DSM 14882 / CIP 104768 / NCIMB 8455) (Ferrobacillus ferrooxidans (strain ATCC 23270)).